Here is a 517-residue protein sequence, read N- to C-terminus: Crotonobetaine/carnitine--CoA ligase (517 aa).

This sequence belongs to the ATP-dependent AMP-binding enzyme family.

The catalysed reaction is 4-(trimethylamino)butanoate + ATP + CoA = 4-(trimethylamino)butanoyl-CoA + AMP + diphosphate. It carries out the reaction crotonobetaine + ATP + CoA = crotonobetainyl-CoA + AMP + diphosphate. The enzyme catalyses (R)-carnitine + ATP + CoA = (R)-carnitinyl-CoA + AMP + diphosphate. The protein operates within amine and polyamine metabolism; carnitine metabolism. Catalyzes the transfer of CoA to carnitine, generating the initial carnitinyl-CoA needed for the CaiB reaction cycle. Also has activity toward crotonobetaine and gamma-butyrobetaine. The protein is Crotonobetaine/carnitine--CoA ligase of Salmonella paratyphi B (strain ATCC BAA-1250 / SPB7).